Consider the following 71-residue polypeptide: Long neurotoxin Tx-NM3-1 (71 aa).

5 cysteine pairs are disulfide-bonded: Cys-3–Cys-20, Cys-14–Cys-41, Cys-26–Cys-30, Cys-45–Cys-56, and Cys-57–Cys-62.

As to expression, expressed by the venom gland.

It localises to the secreted. Functionally, binds with high affinity to muscular (alpha-1-beta-1-gamma-delta/CHRNA1-CHRNB1-CHRNG-CHRND) and neuronal (alpha-7/CHRNA7) nicotinic acetylcholine receptor (nAChR) and inhibits acetylcholine from binding to the receptor, thereby impairing neuromuscular and neuronal transmission. Ranges of nAChR inhibition are in nanomolar (competitive binding with alpha-bungarotoxin gives Ki=1.66 nM on muscle nAChR and Ki=4.84 nM on alpha-7). Also shows moderate inhibition on GABA(A) alpha-1-beta-3-gamma-2 receptor (GABRA1-GABRB3-GABRG2) (IC(50)=0.68 uM), and a lower inhibition on alpha-1-beta-2-gamma-2 (GABRA1-GABRB2-GABRG2) and alpha-3-beta-2-gamma-2 (GABRA3-GABRB2-GABRG2). The chain is Long neurotoxin Tx-NM3-1 from Naja melanoleuca (Forest cobra).